A 286-amino-acid polypeptide reads, in one-letter code: Flagellar filament 31.3 kDa core protein (286 aa).

This sequence belongs to the bacterial flagellin family. In terms of assembly, the core of the flagellum consists of several antigenically related polypeptides. Post-translationally, glycosylated. Glycosylation is not essential for motility.

Its subcellular location is the periplasmic flagellum. The protein resides in the periplasm. Its function is as follows. Component of the core of the flagella. This is Flagellar filament 31.3 kDa core protein (flaB2) from Treponema maltophilum.